A 716-amino-acid polypeptide reads, in one-letter code: Polyribonucleotide nucleotidyltransferase (716 aa).

Mg(2+)-binding residues include D485 and D491. In terms of domain architecture, KH spans 552–611 (PRFTTIKIDQDKIKDVIGKGGAVIRELTESTNTNIEIGDDGTIKVAASDQADADAAIEKI). The region spanning 621–689 (GKIYQGKVAR…RQGRVRLSMK (69 aa)) is the S1 motif domain. Residues 689–698 (KEAAEKKEEP) show a composition bias toward basic and acidic residues. Positions 689 to 716 (KEAAEKKEEPAPEAPAEPAAEEENKSEE) are disordered. Over residues 707 to 716 (AAEEENKSEE) the composition is skewed to acidic residues.

Belongs to the polyribonucleotide nucleotidyltransferase family. In terms of assembly, component of the RNA degradosome, which is a multiprotein complex involved in RNA processing and mRNA degradation. Requires Mg(2+) as cofactor.

The protein localises to the cytoplasm. The enzyme catalyses RNA(n+1) + phosphate = RNA(n) + a ribonucleoside 5'-diphosphate. Involved in mRNA degradation. Catalyzes the phosphorolysis of single-stranded polyribonucleotides processively in the 3'- to 5'-direction. The polypeptide is Polyribonucleotide nucleotidyltransferase (Idiomarina loihiensis (strain ATCC BAA-735 / DSM 15497 / L2-TR)).